The chain runs to 232 residues: 5'-methylthioadenosine/S-adenosylhomocysteine nucleosidase (232 aa).

Glutamate 12 functions as the Proton acceptor in the catalytic mechanism. Substrate is bound by residues glycine 78, methionine 153, and 174–175 (ME). Catalysis depends on aspartate 198, which acts as the Proton donor.

This sequence belongs to the PNP/UDP phosphorylase family. MtnN subfamily.

The enzyme catalyses S-adenosyl-L-homocysteine + H2O = S-(5-deoxy-D-ribos-5-yl)-L-homocysteine + adenine. It catalyses the reaction S-methyl-5'-thioadenosine + H2O = 5-(methylsulfanyl)-D-ribose + adenine. The catalysed reaction is 5'-deoxyadenosine + H2O = 5-deoxy-D-ribose + adenine. It functions in the pathway amino-acid biosynthesis; L-methionine biosynthesis via salvage pathway; S-methyl-5-thio-alpha-D-ribose 1-phosphate from S-methyl-5'-thioadenosine (hydrolase route): step 1/2. Functionally, catalyzes the irreversible cleavage of the glycosidic bond in both 5'-methylthioadenosine (MTA) and S-adenosylhomocysteine (SAH/AdoHcy) to adenine and the corresponding thioribose, 5'-methylthioribose and S-ribosylhomocysteine, respectively. Also cleaves 5'-deoxyadenosine, a toxic by-product of radical S-adenosylmethionine (SAM) enzymes, into 5-deoxyribose and adenine. The polypeptide is 5'-methylthioadenosine/S-adenosylhomocysteine nucleosidase (Geobacillus sp. (strain WCH70)).